The chain runs to 78 residues: Small ribosomal subunit protein uS19m (78 aa).

The protein belongs to the universal ribosomal protein uS19 family.

Its subcellular location is the mitochondrion. The chain is Small ribosomal subunit protein uS19m (RPS19) from Acanthamoeba castellanii (Amoeba).